The sequence spans 231 residues: Probable transglycosylase SceD (231 aa).

The signal sequence occupies residues 1-27; the sequence is MKKTLLASSLAVGLGIVAGNAGHEAHA. Over residues 93 to 116 the composition is skewed to polar residues; it reads SAQAPATNNVEPSAVQANQVQSQE. The tract at residues 93-152 is disordered; it reads SAQAPATNNVEPSAVQANQVQSQEVEAPQNAQTQQPQASTSNNSQVTATPTESKASEGSS. A compositionally biased stretch (low complexity) spans 119–137; that stretch reads APQNAQTQQPQASTSNNSQ. Positions 138–152 are enriched in polar residues; the sequence is VTATPTESKASEGSS.

Belongs to the transglycosylase family. SceD subfamily.

Its subcellular location is the secreted. Functionally, is able to cleave peptidoglycan and affects clumping and separation of bacterial cells. The polypeptide is Probable transglycosylase SceD (sceD) (Staphylococcus aureus (strain Mu3 / ATCC 700698)).